The sequence spans 237 residues: Phosphoadenosine 5'-phosphosulfate reductase (237 aa).

The active-site Nucleophile; cysteine thiosulfonate intermediate is cysteine 231.

Belongs to the PAPS reductase family. CysH subfamily.

It is found in the cytoplasm. It carries out the reaction [thioredoxin]-disulfide + sulfite + adenosine 3',5'-bisphosphate + 2 H(+) = [thioredoxin]-dithiol + 3'-phosphoadenylyl sulfate. The protein operates within sulfur metabolism; hydrogen sulfide biosynthesis; sulfite from sulfate: step 3/3. Functionally, catalyzes the formation of sulfite from phosphoadenosine 5'-phosphosulfate (PAPS) using thioredoxin as an electron donor. In Xylella fastidiosa (strain 9a5c), this protein is Phosphoadenosine 5'-phosphosulfate reductase.